We begin with the raw amino-acid sequence, 186 residues long: MKRLISCLTIICALNRSAAAETTSSPCSRWISLLKPVCQRIHQTWTEGHDDMYFSGYAWHNRYTYRPEKIKSYNEAAWGGGLGKSLFDEKGNWHGLYAIAFLDSHRHIEPAVGYAYLKTASVNKDIKAGLGYSVLVTSRVDYDNVPFPGALPWVALFYKRTTVAATYIPGSAGAGNVLYILGKISL.

The signal sequence occupies residues 1-19 (MKRLISCLTIICALNRSAA). Active-site residues include His60, Asp103, and Ser104.

The protein belongs to the lipid A palmitoyltransferase family. Homodimer.

It is found in the cell outer membrane. The enzyme catalyses a lipid A + a 1,2-diacyl-sn-glycero-3-phosphocholine = a hepta-acyl lipid A + a 2-acyl-sn-glycero-3-phosphocholine. It catalyses the reaction a lipid IVA + a 1,2-diacyl-sn-glycero-3-phosphocholine = a lipid IVB + a 2-acyl-sn-glycero-3-phosphocholine. The catalysed reaction is a lipid IIA + a 1,2-diacyl-sn-glycero-3-phosphocholine = a lipid IIB + a 2-acyl-sn-glycero-3-phosphocholine. Its function is as follows. Transfers a fatty acid residue from the sn-1 position of a phospholipid to the N-linked hydroxyfatty acid chain on the proximal unit of lipid A or its precursors. Confers resistance to cationic antimicrobial peptides (CAMPs). Promotes the ability of L.pneumophila to replicate and/or survive in macrophages. Important for ability to kill macrophages and to promote the virulence. This is Lipid A acyltransferase PagP from Legionella pneumophila.